Consider the following 288-residue polypeptide: 4-diphosphocytidyl-2-C-methyl-D-erythritol kinase (288 aa).

Lysine 11 is an active-site residue. 100–110 (PTSAGLGSGSS) is a binding site for ATP. Aspartate 140 is a catalytic residue.

It belongs to the GHMP kinase family. IspE subfamily.

It carries out the reaction 4-CDP-2-C-methyl-D-erythritol + ATP = 4-CDP-2-C-methyl-D-erythritol 2-phosphate + ADP + H(+). Its pathway is isoprenoid biosynthesis; isopentenyl diphosphate biosynthesis via DXP pathway; isopentenyl diphosphate from 1-deoxy-D-xylulose 5-phosphate: step 3/6. Catalyzes the phosphorylation of the position 2 hydroxy group of 4-diphosphocytidyl-2C-methyl-D-erythritol. In Wolbachia sp. subsp. Brugia malayi (strain TRS), this protein is 4-diphosphocytidyl-2-C-methyl-D-erythritol kinase.